A 375-amino-acid polypeptide reads, in one-letter code: Succinyl-diaminopimelate desuccinylase (375 aa).

Residue H66 participates in Zn(2+) binding. Residue D68 is part of the active site. D99 is a binding site for Zn(2+). E133 serves as the catalytic Proton acceptor. Positions 134, 162, and 348 each coordinate Zn(2+).

This sequence belongs to the peptidase M20A family. DapE subfamily. Homodimer. Zn(2+) serves as cofactor. The cofactor is Co(2+).

The catalysed reaction is N-succinyl-(2S,6S)-2,6-diaminopimelate + H2O = (2S,6S)-2,6-diaminopimelate + succinate. Its pathway is amino-acid biosynthesis; L-lysine biosynthesis via DAP pathway; LL-2,6-diaminopimelate from (S)-tetrahydrodipicolinate (succinylase route): step 3/3. Its function is as follows. Catalyzes the hydrolysis of N-succinyl-L,L-diaminopimelic acid (SDAP), forming succinate and LL-2,6-diaminopimelate (DAP), an intermediate involved in the bacterial biosynthesis of lysine and meso-diaminopimelic acid, an essential component of bacterial cell walls. This chain is Succinyl-diaminopimelate desuccinylase, found in Escherichia coli O139:H28 (strain E24377A / ETEC).